We begin with the raw amino-acid sequence, 295 residues long: 4-diphosphocytidyl-2-C-methyl-D-erythritol kinase (295 aa).

Lys-22 is an active-site residue. 106–116 is an ATP binding site; it reads PAGGGFGGGSS. Asp-148 is a catalytic residue.

The protein belongs to the GHMP kinase family. IspE subfamily.

It catalyses the reaction 4-CDP-2-C-methyl-D-erythritol + ATP = 4-CDP-2-C-methyl-D-erythritol 2-phosphate + ADP + H(+). It participates in isoprenoid biosynthesis; isopentenyl diphosphate biosynthesis via DXP pathway; isopentenyl diphosphate from 1-deoxy-D-xylulose 5-phosphate: step 3/6. Functionally, catalyzes the phosphorylation of the position 2 hydroxy group of 4-diphosphocytidyl-2C-methyl-D-erythritol. In Xanthomonas oryzae pv. oryzae (strain MAFF 311018), this protein is 4-diphosphocytidyl-2-C-methyl-D-erythritol kinase.